The following is a 437-amino-acid chain: Probable inactive DNA (cytosine-5)-methyltransferase DRM1B (437 aa).

UBA domains follow at residues 20–60 (SAPS…LLQL) and 120–164 (EMSE…IYAP). An SAM-dependent MTase DRM-type domain is found at 243 to 437 (VHRNLPDHAL…LIQLHTTSLC (195 aa)).

It belongs to the class I-like SAM-binding methyltransferase superfamily. DRM-methyltransferase family.

The protein localises to the nucleus. Its function is as follows. Involved in de novo DNA methylation. Involved in RNA-directed DNA methylation (RdDM). This chain is Probable inactive DNA (cytosine-5)-methyltransferase DRM1B, found in Oryza sativa subsp. japonica (Rice).